Reading from the N-terminus, the 214-residue chain is NAD(P)H-quinone oxidoreductase subunit 6, chloroplastic (214 aa).

The next 5 membrane-spanning stretches (helical) occupy residues 10-30 (FSLFFLEGAVLVGALGVVLLP), 32-52 (ILYSAFLLGGVLMSIAGIYLL), 61-81 (AQVLIYVGAINVLILFAIMLV), 102-122 (IIGLTCIGLAGFLIDMIVTTP), and 163-183 (LLPFEVISLLLLVTLVGAIVI).

The protein belongs to the complex I subunit 6 family. In terms of assembly, NDH is composed of at least 16 different subunits, 5 of which are encoded in the nucleus.

It is found in the plastid. The protein localises to the chloroplast thylakoid membrane. The catalysed reaction is a plastoquinone + NADH + (n+1) H(+)(in) = a plastoquinol + NAD(+) + n H(+)(out). The enzyme catalyses a plastoquinone + NADPH + (n+1) H(+)(in) = a plastoquinol + NADP(+) + n H(+)(out). NDH shuttles electrons from NAD(P)H:plastoquinone, via FMN and iron-sulfur (Fe-S) centers, to quinones in the photosynthetic chain and possibly in a chloroplast respiratory chain. The immediate electron acceptor for the enzyme in this species is believed to be plastoquinone. Couples the redox reaction to proton translocation, and thus conserves the redox energy in a proton gradient. In Chlorokybus atmophyticus (Soil alga), this protein is NAD(P)H-quinone oxidoreductase subunit 6, chloroplastic (ndhG).